Reading from the N-terminus, the 250-residue chain is Aliphatic sulfonates import ATP-binding protein SsuB 2 (250 aa).

The ABC transporter domain occupies 13 to 229 (VRLQGLTRSF…SYRDPLLGEY (217 aa)). Position 45-52 (45-52 (GHSGSGKS)) interacts with ATP.

Belongs to the ABC transporter superfamily. Aliphatic sulfonates importer (TC 3.A.1.17.2) family. In terms of assembly, the complex is composed of two ATP-binding proteins (SsuB), two transmembrane proteins (SsuC) and a solute-binding protein (SsuA).

The protein resides in the cell membrane. It carries out the reaction ATP + H2O + aliphatic sulfonate-[sulfonate-binding protein]Side 1 = ADP + phosphate + aliphatic sulfonateSide 2 + [sulfonate-binding protein]Side 1.. Functionally, part of the ABC transporter complex SsuABC involved in aliphatic sulfonates import. Responsible for energy coupling to the transport system. The protein is Aliphatic sulfonates import ATP-binding protein SsuB 2 of Streptomyces avermitilis (strain ATCC 31267 / DSM 46492 / JCM 5070 / NBRC 14893 / NCIMB 12804 / NRRL 8165 / MA-4680).